The chain runs to 416 residues: Serine/threonine transporter SstT (416 aa).

The next 9 helical transmembrane spans lie at glycine 14–serine 34, phenylalanine 43–leucine 63, valine 82–phenylalanine 102, alanine 141–leucine 161, isoleucine 192–glycine 212, leucine 220–isoleucine 240, methionine 298–valine 318, alanine 339–isoleucine 359, and valine 363–threonine 383.

Belongs to the dicarboxylate/amino acid:cation symporter (DAACS) (TC 2.A.23) family.

It localises to the cell inner membrane. It catalyses the reaction L-serine(in) + Na(+)(in) = L-serine(out) + Na(+)(out). It carries out the reaction L-threonine(in) + Na(+)(in) = L-threonine(out) + Na(+)(out). In terms of biological role, involved in the import of serine and threonine into the cell, with the concomitant import of sodium (symport system). The protein is Serine/threonine transporter SstT of Laribacter hongkongensis (strain HLHK9).